Reading from the N-terminus, the 425-residue chain is Riboflavin biosynthesis protein RibBA (425 aa).

Residues 1–204 (MTRLDSVERA…IADLIEWRRK (204 aa)) are DHBP synthase. Residues 28 to 29 (RE), Asp-33, 141 to 145 (RPGHT), and Glu-165 contribute to the D-ribulose 5-phosphate site. Glu-29 lines the Mg(2+) pocket. His-144 contacts Mg(2+). Positions 205–425 (HEKHIERIAE…HLPGEFGGAL (221 aa)) are GTP cyclohydrolase II. 259 to 263 (RVHSE) is a binding site for GTP. Residues Cys-264, Cys-275, and Cys-277 each contribute to the Zn(2+) site. GTP is bound by residues Gln-280, 303–305 (EGR), and Thr-325. Asp-337 (proton acceptor; for GTP cyclohydrolase activity) is an active-site residue. Catalysis depends on Arg-339, which acts as the Nucleophile; for GTP cyclohydrolase activity. GTP is bound by residues Thr-360 and Lys-365.

In the N-terminal section; belongs to the DHBP synthase family. This sequence in the C-terminal section; belongs to the GTP cyclohydrolase II family. Mg(2+) is required as a cofactor. The cofactor is Mn(2+). It depends on Zn(2+) as a cofactor.

It catalyses the reaction D-ribulose 5-phosphate = (2S)-2-hydroxy-3-oxobutyl phosphate + formate + H(+). The enzyme catalyses GTP + 4 H2O = 2,5-diamino-6-hydroxy-4-(5-phosphoribosylamino)-pyrimidine + formate + 2 phosphate + 3 H(+). It functions in the pathway cofactor biosynthesis; riboflavin biosynthesis; 2-hydroxy-3-oxobutyl phosphate from D-ribulose 5-phosphate: step 1/1. Its pathway is cofactor biosynthesis; riboflavin biosynthesis; 5-amino-6-(D-ribitylamino)uracil from GTP: step 1/4. Catalyzes the conversion of D-ribulose 5-phosphate to formate and 3,4-dihydroxy-2-butanone 4-phosphate. In terms of biological role, catalyzes the conversion of GTP to 2,5-diamino-6-ribosylamino-4(3H)-pyrimidinone 5'-phosphate (DARP), formate and pyrophosphate. In Mycobacterium avium (strain 104), this protein is Riboflavin biosynthesis protein RibBA.